Reading from the N-terminus, the 244-residue chain is Ribosome-inactivating protein cucurmosin (244 aa).

Catalysis depends on residues tyrosine 70, tyrosine 109, glutamate 158, and arginine 161. 2 N-linked (GlcNAc...) asparagine glycosylation sites follow: asparagine 189 and asparagine 225.

This sequence belongs to the ribosome-inactivating protein family. Type 1 RIP subfamily. In terms of processing, the N-linked glycan consists of GlcNAc2Man3Xyl.

It carries out the reaction Endohydrolysis of the N-glycosidic bond at one specific adenosine on the 28S rRNA.. In terms of biological role, has cytotoxic activity towards cancer cells, but not normal cells. Inhibits the growth of the human leukemia cell line K562, the murine melanoma cell line B16 and the lung adenocarcinoma cell line A549 with IC(50) values of 88.1 nM, 63.4 nM and 359.3 nM respectively. This chain is Ribosome-inactivating protein cucurmosin, found in Cucurbita moschata (Winter crookneck squash).